The sequence spans 197 residues: C4-dicarboxylate transport transcriptional regulatory protein DctR (197 aa).

The region spanning 4 to 120 is the Response regulatory domain; it reads TVHIVDDEES…HIVDIALSAI (117 aa). D53 bears the 4-aspartylphosphate mark. The inter-domain linker stretch occupies residues 128-135; the sequence is AEAQAREA. In terms of domain architecture, HTH luxR-type spans 136–197; it reads VAARRASLSA…RNIADLARMT (62 aa). The H-T-H motif DNA-binding region spans 160 to 179; the sequence is NKQIAERLGIAMRTVEVHRS.

In terms of processing, phosphorylated by DctS.

It localises to the cytoplasm. Member of the two-component regulatory system DctS/DctR involved in the transport of C4-dicarboxylates. DctR functions as a transcriptional repressor of genes for C4-dicarboxylate transport. This Rhodobacter capsulatus (Rhodopseudomonas capsulata) protein is C4-dicarboxylate transport transcriptional regulatory protein DctR (dctR).